A 65-amino-acid polypeptide reads, in one-letter code: Large ribosomal subunit protein bL35 (65 aa).

Belongs to the bacterial ribosomal protein bL35 family.

This chain is Large ribosomal subunit protein bL35, found in Ruminiclostridium cellulolyticum (strain ATCC 35319 / DSM 5812 / JCM 6584 / H10) (Clostridium cellulolyticum).